The sequence spans 352 residues: Ion-translocating oxidoreductase complex subunit D (352 aa).

A run of 5 helical transmembrane segments spans residues 20-40, 42-62, 78-109, 123-143, and 148-168; these read IMLL…WFFG, GTLV…ALVL, ALLT…VIIA, PAMI…TSWL, and IAVN…GHTA. Position 187 is an FMN phosphoryl threonine (T187). 5 helical membrane passes run 214–234, 242–262, 267–287, 301–321, and 322–342; these read ILAG…GVWL, WHIP…GWLF, LAAP…FFIL, LIFG…GGYP, and DGVA…DYYT.

It belongs to the NqrB/RnfD family. In terms of assembly, the complex is composed of six subunits: RsxA, RsxB, RsxC, RsxD, RsxE and RsxG. The cofactor is FMN.

It localises to the cell inner membrane. Part of a membrane-bound complex that couples electron transfer with translocation of ions across the membrane. Required to maintain the reduced state of SoxR. The chain is Ion-translocating oxidoreductase complex subunit D from Escherichia coli O157:H7.